We begin with the raw amino-acid sequence, 188 residues long: Probable nicotinate-nucleotide adenylyltransferase (188 aa).

It belongs to the NadD family.

The enzyme catalyses nicotinate beta-D-ribonucleotide + ATP + H(+) = deamido-NAD(+) + diphosphate. It functions in the pathway cofactor biosynthesis; NAD(+) biosynthesis; deamido-NAD(+) from nicotinate D-ribonucleotide: step 1/1. In terms of biological role, catalyzes the reversible adenylation of nicotinate mononucleotide (NaMN) to nicotinic acid adenine dinucleotide (NaAD). The sequence is that of Probable nicotinate-nucleotide adenylyltransferase from Solibacter usitatus (strain Ellin6076).